We begin with the raw amino-acid sequence, 370 residues long: N-acetyldiaminopimelate deacetylase (370 aa).

Residue aspartate 67 is part of the active site. Glutamate 126 (proton acceptor) is an active-site residue.

Belongs to the peptidase M20A family. N-acetyldiaminopimelate deacetylase subfamily.

The enzyme catalyses N-acetyl-(2S,6S)-2,6-diaminopimelate + H2O = (2S,6S)-2,6-diaminopimelate + acetate. The protein operates within amino-acid biosynthesis; L-lysine biosynthesis via DAP pathway; LL-2,6-diaminopimelate from (S)-tetrahydrodipicolinate (acetylase route): step 3/3. Functionally, catalyzes the conversion of N-acetyl-diaminopimelate to diaminopimelate and acetate. The chain is N-acetyldiaminopimelate deacetylase from Exiguobacterium sibiricum (strain DSM 17290 / CCUG 55495 / CIP 109462 / JCM 13490 / 255-15).